A 482-amino-acid chain; its full sequence is MFS-type transporter cnsL (482 aa).

Residues 73–93 (LFVCATLSGLDKTAISAAAVY) traverse the membrane as a helical segment. Asparagine 100 carries N-linked (GlcNAc...) asparagine glycosylation. Transmembrane regions (helical) follow at residues 108-128 (WIGS…AYCL), 131-151 (VPAV…EMSV), 170-190 (IILN…VGYY), 199-219 (IIFL…YFVL), 304-324 (LLAM…SYLA), 333-353 (AIVT…YALP), 361-381 (LVGL…VSVY), 392-412 (ITLY…GPQT), and 426-446 (VAMI…GVVC).

The protein belongs to the major facilitator superfamily. Allantoate permease family.

It is found in the cell membrane. Its function is as follows. MFS-type transporter; part of the gene cluster that mediates the biosynthesis of communesins, a prominent class of indole alkaloids with great potential as pharmaceuticals. With the MFS transporter cnsO, is most likely responsible for cummunesins secretion and thereby may contribute to intrinsic resistance. This chain is MFS-type transporter cnsL, found in Penicillium expansum (Blue mold rot fungus).